The primary structure comprises 178 residues: GTP-dependent dephospho-CoA kinase (178 aa).

6 residues coordinate GTP: aspartate 43, isoleucine 44, valine 45, aspartate 62, lysine 64, and glutamate 120.

Belongs to the GTP-dependent DPCK family.

It carries out the reaction 3'-dephospho-CoA + GTP = GDP + CoA + H(+). It participates in cofactor biosynthesis; coenzyme A biosynthesis. Functionally, catalyzes the GTP-dependent phosphorylation of the 3'-hydroxyl group of dephosphocoenzyme A to form coenzyme A (CoA). The sequence is that of GTP-dependent dephospho-CoA kinase from Natronomonas pharaonis (strain ATCC 35678 / DSM 2160 / CIP 103997 / JCM 8858 / NBRC 14720 / NCIMB 2260 / Gabara) (Halobacterium pharaonis).